A 567-amino-acid chain; its full sequence is Thiol:disulfide interchange protein DsbD (567 aa).

An N-terminal signal peptide occupies residues 1–19; the sequence is MAQRIFTLILLLCSTSAFA. 2 cysteine pairs are disulfide-bonded: cysteine 122–cysteine 128 and cysteine 185–cysteine 307. Helical transmembrane passes span 170-192, 212-234, 246-268, 297-319, 326-348, 358-380, and 387-409; these read ALWALLIGIGIAFTPCVLPMYPL, LAFIYVQGMALTYTALGLVVAAA, YVLIGLAIVFTLLALSMFGLFTL, GAIAGLICSPCTTAPLSAILLYI, WLGGGTLYLYALGMGLPLMLVTV, GPWMAHVKTAFGFVILALPVFLL, and AWGLRLWSLLGVAFFGWAFITSL. The Thioredoxin domain maps to 435–567; that stretch reads QDWAFGSPSA…FSAHLHDRQP (133 aa). Cysteine 482 and cysteine 485 are joined by a disulfide.

It belongs to the thioredoxin family. DsbD subfamily.

Its subcellular location is the cell inner membrane. It carries out the reaction [protein]-dithiol + NAD(+) = [protein]-disulfide + NADH + H(+). The enzyme catalyses [protein]-dithiol + NADP(+) = [protein]-disulfide + NADPH + H(+). In terms of biological role, required to facilitate the formation of correct disulfide bonds in some periplasmic proteins and for the assembly of the periplasmic c-type cytochromes. Acts by transferring electrons from cytoplasmic thioredoxin to the periplasm. This transfer involves a cascade of disulfide bond formation and reduction steps. This is Thiol:disulfide interchange protein DsbD from Salmonella typhimurium (strain LT2 / SGSC1412 / ATCC 700720).